The primary structure comprises 199 residues: Superoxide dismutase [Fe] (199 aa).

Residues His27, His79, Asp161, and His165 each coordinate Fe cation.

It belongs to the iron/manganese superoxide dismutase family. As to quaternary structure, homodimer. Requires Fe cation as cofactor.

The catalysed reaction is 2 superoxide + 2 H(+) = H2O2 + O2. Its function is as follows. Destroys superoxide anion radicals which are normally produced within the cells and which are toxic to biological systems. The polypeptide is Superoxide dismutase [Fe] (sodB) (Synechocystis sp. (strain ATCC 27184 / PCC 6803 / Kazusa)).